We begin with the raw amino-acid sequence, 810 residues long: Valine--tRNA ligase (810 aa).

The 'HIGH' region signature appears at 45–55; that stretch reads PTISGQLHIGH. A 'KMSKS' region motif is present at residues 534-538; it reads KMSKS. Lysine 537 contributes to the ATP binding site.

The protein belongs to the class-I aminoacyl-tRNA synthetase family. ValS type 2 subfamily. As to quaternary structure, monomer.

The protein localises to the cytoplasm. It carries out the reaction tRNA(Val) + L-valine + ATP = L-valyl-tRNA(Val) + AMP + diphosphate. Catalyzes the attachment of valine to tRNA(Val). As ValRS can inadvertently accommodate and process structurally similar amino acids such as threonine, to avoid such errors, it has a 'posttransfer' editing activity that hydrolyzes mischarged Thr-tRNA(Val) in a tRNA-dependent manner. This Ehrlichia ruminantium (strain Welgevonden) protein is Valine--tRNA ligase.